We begin with the raw amino-acid sequence, 895 residues long: DNA mismatch repair protein MutS (895 aa).

G607–S614 contacts ATP.

Belongs to the DNA mismatch repair MutS family.

Its function is as follows. This protein is involved in the repair of mismatches in DNA. It is possible that it carries out the mismatch recognition step. This protein has a weak ATPase activity. The chain is DNA mismatch repair protein MutS from Bacillus cytotoxicus (strain DSM 22905 / CIP 110041 / 391-98 / NVH 391-98).